Consider the following 401-residue polypeptide: cAMP-dependent protein kinase type II-alpha regulatory subunit (401 aa).

An N-acetylserine modification is found at serine 2. The interval 2 to 135 (SHIQIPPGLT…RLQEACKDIL (134 aa)) is dimerization and phosphorylation. The tract at residues 43-65 (ARSRASTPPAAPPSGSQDFDPGA) is disordered. Residues 46–58 (RASTPPAAPPSGS) show a composition bias toward low complexity. Serine 48, serine 75, and serine 77 each carry phosphoserine. The residue at position 96 (serine 96) is a Phosphoserine; by PKA. 3',5'-cyclic AMP contacts are provided by residues 136–257 (LFKN…ESVP), glutamate 205, arginine 214, 258–401 (LLKS…DPGQ), glutamate 335, and arginine 344. Threonine 212 is subject to Phosphothreonine; by PDPK1. 2 positions are modified to phosphoserine: serine 347 and serine 392.

The protein belongs to the cAMP-dependent kinase regulatory chain family. In terms of assembly, the inactive form of the enzyme is composed of two regulatory chains and two catalytic chains. Activation by cAMP produces two active catalytic monomers and a regulatory dimer that binds four cAMP molecules. Interacts with AKAP4 and CBFA2T3. Interacts with the phosphorylated form of PJA2. Interacts with MYRIP; this interaction may link PKA to components of the exocytosis machinery, thus facilitating exocytosis, including insulin release. Forms a complex composed of PRKAR2A, GSK3B and GSKIP through GSKIP interaction; facilitates PKA-induced phosphorylation and regulates GSK3B activity. Interacts with ADCY8; inhibits adenylate cyclase activity through PKA phosphorylation. A second phosphorylation site has not been located. In terms of processing, phosphorylation of Thr-212 by PDPK1 seems to attenuate the activity of PKA, perhaps by strengthening interaction between the regulatory and the catalytic subunits. As to expression, four types of regulatory chains are found: I-alpha, I-beta, II-alpha, and II-beta. Their expression varies among tissues and is in some cases constitutive and in others inducible.

It is found in the cytoplasm. The protein resides in the cell membrane. In terms of biological role, regulatory subunit of the cAMP-dependent protein kinases involved in cAMP signaling in cells. Type II regulatory chains mediate membrane association by binding to anchoring proteins, including the MAP2 kinase. The sequence is that of cAMP-dependent protein kinase type II-alpha regulatory subunit (PRKAR2A) from Bos taurus (Bovine).